A 379-amino-acid polypeptide reads, in one-letter code: MTHMRKSHPLIKIINHSFIDLPTPSNISAWWNFGSLLGICLGLQIITGLFLAMHYTADTITAFSSVTHICRDVNYGWLIRYLHANGASMFFILLYLHIGRGIYYGSYTFMETWNIGILLLFAVMATAFMGYVLPWGQMSSWGATVITNLLSAIPYIGTTLVEWIWGGFSVDKATLTRFFAFHFILPFIIPALVMIHFFFLHETGSNNPSGLNSDSDKIPFHPYYTIKDIMGLLIMMLALMSLVLFSPDLLGDPDNYTPANPLNTPPHIKPEWYFLFAYAILRSIPNKLGGVLALVLSILVLALFPMLHLSKQRSMTFRPFSQCLLWMLTANLFILTWIGGQPVEYPYITIGQLASINYFFTILIVSRLVSLMENKVLKW.

4 consecutive transmembrane segments (helical) span residues 33–53 (FGSL…FLAM), 77–98 (WLIR…YLHI), 113–133 (WNIG…GYVL), and 178–198 (FFAF…IHFF). His-83 and His-97 together coordinate heme b. Residues His-182 and His-196 each coordinate heme b. His-201 contributes to the a ubiquinone binding site. The next 4 helical transmembrane spans lie at 226-246 (IKDI…VLFS), 288-308 (LGGV…PMLH), 320-340 (FSQC…WIGG), and 347-367 (YITI…IVSR).

Belongs to the cytochrome b family. The cytochrome bc1 complex contains 11 subunits: 3 respiratory subunits (MT-CYB, CYC1 and UQCRFS1), 2 core proteins (UQCRC1 and UQCRC2) and 6 low-molecular weight proteins (UQCRH/QCR6, UQCRB/QCR7, UQCRQ/QCR8, UQCR10/QCR9, UQCR11/QCR10 and a cleavage product of UQCRFS1). This cytochrome bc1 complex then forms a dimer. Heme b is required as a cofactor.

The protein resides in the mitochondrion inner membrane. Its function is as follows. Component of the ubiquinol-cytochrome c reductase complex (complex III or cytochrome b-c1 complex) that is part of the mitochondrial respiratory chain. The b-c1 complex mediates electron transfer from ubiquinol to cytochrome c. Contributes to the generation of a proton gradient across the mitochondrial membrane that is then used for ATP synthesis. The sequence is that of Cytochrome b (MT-CYB) from Dolichotis patagonum (Patagonian mara).